A 381-amino-acid polypeptide reads, in one-letter code: Putative F-box/kelch-repeat protein At3g17570 (381 aa).

Residues 1–45 (MFTDLPRDLETEILSRVPATSLQKLKPTCKRWYTLFKDPEFLKKH) enclose the F-box domain. Kelch repeat units lie at residues 151 to 199 (SYKI…TLKG), 229 to 281 (LLYQ…KIVE), and 331 to 379 (RFYI…GGKR).

This Arabidopsis thaliana (Mouse-ear cress) protein is Putative F-box/kelch-repeat protein At3g17570.